We begin with the raw amino-acid sequence, 457 residues long: uncharacterized protein (457 aa).

Residue Lys-75 is modified to N6-(pyridoxal phosphate)lysine.

The cofactor is pyridoxal 5'-phosphate.

This is an uncharacterized protein from Sinorhizobium fredii (strain NBRC 101917 / NGR234).